The chain runs to 1133 residues: RNA-dependent RNA polymerase 2 (1133 aa).

Mg(2+) contacts are provided by aspartate 830, aspartate 832, and aspartate 834.

It belongs to the RdRP family. As to quaternary structure, interacts with NRPD1 and SHH1. Associates with Pol IV complex, forming an interpolymerase channel bridging their active sites, through which the Pol IV-generated transcript is handed over to the RDR2 active site after being backtracked, where it is used as the template for double-stranded RNA (dsRNA) synthesis. Interacts with JMJ24.

Its subcellular location is the nucleus. The protein resides in the nucleoplasm. It is found in the nucleolus. The enzyme catalyses RNA(n) + a ribonucleoside 5'-triphosphate = RNA(n+1) + diphosphate. In terms of biological role, RNA-dependent direct polymerase involved in the production of small interfering RNAs (siRNAs). Binds to single-stranded RNA (ssRNA); engages ssRNAs longer than 7 nucleotides and initiates internal to their 3' ends. Able to transcribe the RNA of an RNA/DNA hybrid, the transcript produced by Pol IV, if its 3' end is accessible, to generate double-stranded small interfering RNAs (dsRNAs) precursor essential for establishing and maintaining DNA methylation. Required for the biogenesis of endogenous siRNAs of 24 nucleotide which derive from heterochromatin and DNA repeats such as transposons or endogenous gene tandem repeats, such as repeats present in FWA gene. Involved in transcriptional gene silencing (TGS). Component of the RNA-directed DNA methylation (RdDM) silencing pathway that utilizes siRNAs to guide DNA methyltransferases to asymmetric cytosines. Involved in control of flowering time through RdDM of FWA locus. Required for reception of long-distance mRNA silencing in the shoot. Required for the formation of telomeric siRNAs and the RNA-dependent DNA methylation of asymmetric cytosines in telomeric (5'-CCCTAAA-3') repeats. The polypeptide is RNA-dependent RNA polymerase 2 (Arabidopsis thaliana (Mouse-ear cress)).